Consider the following 66-residue polypeptide: Large ribosomal subunit protein uL30 (66 aa).

This sequence belongs to the universal ribosomal protein uL30 family. In terms of assembly, part of the 50S ribosomal subunit.

The protein is Large ribosomal subunit protein uL30 of Chelativorans sp. (strain BNC1).